A 138-amino-acid chain; its full sequence is Lutropin subunit beta (138 aa).

Residues 1-19 (RYQELTVLLLLLLEGGSWG) form the signal peptide. Intrachain disulfides connect Cys-27-Cys-75, Cys-41-Cys-90, Cys-44-Cys-128, Cys-52-Cys-106, Cys-56-Cys-108, and Cys-111-Cys-118. N-linked (GlcNAc...) asparagine glycosylation occurs at Asn-31.

The protein belongs to the glycoprotein hormones subunit beta family. In terms of assembly, heterodimer of a common alpha chain and a unique beta chain which confers biological specificity to thyrotropin, lutropin, follitropin and gonadotropin.

The protein resides in the secreted. In terms of biological role, promotes spermatogenesis and ovulation by stimulating the testes and ovaries to synthesize steroids. In Osphranter rufus (Red kangaroo), this protein is Lutropin subunit beta (LHB).